The primary structure comprises 329 residues: Putative dehydrogenase RB0419 (329 aa).

This sequence belongs to the ornithine cyclodeaminase/mu-crystallin family.

In Rhizobium meliloti (strain 1021) (Ensifer meliloti), this protein is Putative dehydrogenase RB0419.